An 86-amino-acid chain; its full sequence is Small ribosomal subunit protein bS16 (86 aa).

The protein belongs to the bacterial ribosomal protein bS16 family.

In Xylella fastidiosa (strain M12), this protein is Small ribosomal subunit protein bS16.